The primary structure comprises 233 residues: Putative nosiheptide resistance regulatory protein (233 aa).

The H-T-H motif DNA-binding region spans Arg-93–Ala-112. A disordered region spans residues Pro-190–Ala-233. The span at Val-217–Ala-233 shows a compositional bias: basic and acidic residues.

Its function is as follows. Seems to be involved in the regulation of nhs expression. In Streptomyces actuosus, this protein is Putative nosiheptide resistance regulatory protein.